The chain runs to 170 residues: Peptide deformylase (170 aa).

Fe cation contacts are provided by cysteine 94 and histidine 136. Residue glutamate 137 is part of the active site. Residue histidine 140 coordinates Fe cation.

This sequence belongs to the polypeptide deformylase family. Requires Fe(2+) as cofactor.

The enzyme catalyses N-terminal N-formyl-L-methionyl-[peptide] + H2O = N-terminal L-methionyl-[peptide] + formate. Its function is as follows. Removes the formyl group from the N-terminal Met of newly synthesized proteins. Requires at least a dipeptide for an efficient rate of reaction. N-terminal L-methionine is a prerequisite for activity but the enzyme has broad specificity at other positions. The chain is Peptide deformylase from Stenotrophomonas maltophilia (strain R551-3).